A 1133-amino-acid chain; its full sequence is MSSLSRELVFLILQFLDEEKFKETVHKLEQESGFYFNMKYFEDEVINGNWDEVERYLGGFTKVDDNRYSMKIFFEIRKQKYLEALDKHDRSKAVEILVKDLKVFASFNEELFKEITQLLTLENFRENEQLSKYGDTKSARAIMLVELKKLIEANPLFRDKLQFPNLKSSRLRTLINQSLNWQHQLCKNPRPNPDIKTLFVDHSCGQPNGARAPSPANNPLLGSIPKPGGFPPLGAHAPFQPAPTPVPPLAGWMSNPPAVTHPAVSGGAIGFGTPTNPAAILKHPRTPTTANPSMDYPSGDSDHVSKRTRPVGMSEEVNLPVNMLPVTYPQSHSYPQDDFHKNVARTLSQGSTPMSMDFHPVQQTLLLVGTNVGDIGLWDVGTKERLVLRNFKVWDLTKCSMALQASLVKDPTVSVNRIIWSPDGTLFGVAYSRHIVQIYSYHGGDDIRQHLEIDAHVGGVNDIAFAHPNKQLCIITCGDDKTIKVWEATSGAKQFTFEGHEAPVYSVCPHYKENIQFIFSTALDGKIKAWLYDNLGSRVDYDAPGHWCTTMAYSADGSRLFSCGTSKDGESHLVEWNESEGAVKRTYQGFRKRSMGVVQFDTTRNRFLAAGDEFLIKIWDMDNTSLLTTIDADGGLPASPRVRFNKEGTLLAVSTHENGIKILANADGVRLLRTLENRSFDASRSASETVTKPLMNPLTAAAAAAASAAAAGTSSGNAAPPAITALNGDSRSLVDVKPRIADEPLDKSKVWKLMEITESSQCRSLKLTDNMRTSKISRLIYTNSGVAILALASNAVHLLWKWPRNDRNSSGKATASVSPQLWQPPSGILMTNDITDNPEEAVHCFALSKNDSYVMSASGGKISLFNMMTFKTMTTFMPPPPAATFLAFHPQDNNIIAIGMDDSTIQIYNVRIDEVKSKLRGHSKKITGLAFSNVLNVLVSSGADAQICVWSTDGWDKLKSRMLQIPSSRPSSIILDTRVQFHQDQLHFLVVHETQIAIYETTKLEPVKQWPVRENSSPITHAMFSCDSQLIYASFLDATVCIFNASSLRLQCRILPASYLPQNISSNVYPVVVAAHPSEANQFALGLTDGGVYVLEPLESERKWGNPPPAENGSTSALSTPPNGASSSDQPER.

Residues 4–36 enclose the LisH domain; sequence LSRELVFLILQFLDEEKFKETVHKLEQESGFYF. The CTLH domain maps to 34 to 92; the sequence is FYFNMKYFEDEVINGNWDEVERYLGGFTKVDDNRYSMKIFFEIRKQKYLEALDKHDRSK. The segment at 287-307 is disordered; that stretch reads PTTANPSMDYPSGDSDHVSKR. WD repeat units follow at residues 348–388, 410–449, 455–496, 499–540, 543–586, 590–629, 634–673, 771–810, 837–875, 878–918, 921–960, and 1014–1053; these read SQGS…RLVL, DPTVSVNRIIWSPDGTLFGVAYSRHIVQIYSYHGGDDIRQ, AHVG…KQFT, GHEA…SRVD, APGH…VKRT, FRKRSMGVVQFDTTRNRFLAAGDEFLIKIWDMDNTSLLTT, GGLPASPRVRFNKEGTLLAVSTHENGIKILANADGVRLLR, MRTSKISRLIYTNSGVAILALASNAVHLLWKWPRNDRNSS, NPEEAVHCFALSKNDSYVMSASGGKISLFNMMTFKTMTT, PPPP…VKSK, GHSKKITGLAFSNVLNVLVSSGADAQICVWSTDGWDKLKS, and ENSSPITHAMFSCDSQLIYASFLDATVCIFNASSLRLQCR. The disordered stretch occupies residues 1099 to 1133; the sequence is ESERKWGNPPPAENGSTSALSTPPNGASSSDQPER. Over residues 1112–1133 the composition is skewed to polar residues; that stretch reads NGSTSALSTPPNGASSSDQPER.

Tetramer. Interacts with D53. Interacts with MODD and HDAC1. Interacts with WOX1. Interacts with MOF1. Expressed in panicles, stems, leaves, spikelets and seed endosperm.

Probable downstream regulator of strigolactones signaling. Functions in a complex with MODD and HDAC1 to down-regulate the histone acetylation level at BZIP46 target genes. BZIP46 is a positive regulator of abscisic acid (ABA) signaling and drought stress tolerance. This Oryza sativa subsp. japonica (Rice) protein is Protein TPR3.